Here is a 149-residue protein sequence, read N- to C-terminus: Basic phospholipase A2 homolog MitTx-beta (149 aa).

The N-terminal stretch at 1-30 is a signal peptide; sequence MDKMNPAHLLVLAAVCVSLLGASSIPPQAL. 7 disulfide bridges follow: cysteine 41–cysteine 100, cysteine 55–cysteine 148, cysteine 57–cysteine 73, cysteine 72–cysteine 130, cysteine 79–cysteine 123, cysteine 89–cysteine 116, and cysteine 109–cysteine 121.

This sequence belongs to the phospholipase A2 family. Group I subfamily. K49 sub-subfamily. In terms of assembly, heterodimer of an alpha (Kunitz-type) and a beta (phospholipase A2 homolog) chains; non-covalently-linked. As to expression, expressed by the venom gland.

The protein resides in the secreted. Its function is as follows. Heterodimer: MitTx, a heteromeric complex between Kunitz- and phospholipase-A2-like proteins, potently, persistently and selectively activates rat and chicken acid-sensing ion channel ASIC1. Both alternatively spliced rat isoforms ASIC1a and ASIC1b are activated, with a higher potency for ASIC1a (EC(50)=9.4 nM) vs ASIC1b (EC(50)=23 nM). The rat ASIC3 subtype is also sensitive to the heterodimer, but with a lower potency (EC(50)=830 nM). On rat ASIC2a, the toxin shows a very weak activation, but produces a remarkable potentiation (&gt;100-fold) of protons when the extracellular pH drops below neutrality. Moderate and weak activations are also observed on the heterotrimers Asic1a-Asic2a and Asic1a-Asic3 (expressed in CHO cells), respectively. The binding sites of the beta subunit of MitTx and the spider psalmotoxin-1 toxin overlap, explaining why these toxins are mutually exclusive. In vivo, the heterodimer elicits robust pain-related behavior in mice by activation of ASIC1 channels on capsaicin-sensitive nerve fibers. In terms of biological role, monomer: does not have phospholipase A2 activity but may maintain some lipid-binding character from its PLA2 lineage, which could aid in effecting neuronal depolarization. This Micrurus tener tener (Texas coral snake) protein is Basic phospholipase A2 homolog MitTx-beta.